The sequence spans 141 residues: ATP synthase epsilon chain (141 aa).

Belongs to the ATPase epsilon chain family. F-type ATPases have 2 components, CF(1) - the catalytic core - and CF(0) - the membrane proton channel. CF(1) has five subunits: alpha(3), beta(3), gamma(1), delta(1), epsilon(1). CF(0) has three main subunits: a, b and c.

Its subcellular location is the cell inner membrane. In terms of biological role, produces ATP from ADP in the presence of a proton gradient across the membrane. In Pseudomonas fluorescens (strain Pf0-1), this protein is ATP synthase epsilon chain.